Here is a 142-residue protein sequence, read N- to C-terminus: Protein archease (142 aa).

D12, D141, and I142 together coordinate Ca(2+).

The protein belongs to the archease family. As to quaternary structure, in solution, exists as a monomer, trimer and hexamer. Oligomeric states form a tripartite complex with tRNA and PAB1947 methyltransferase.

Functionally, activates the tRNA-splicing ligase complex by facilitating the enzymatic turnover of catalytic subunit RtcB. Acts by promoting the guanylylation of RtcB, a key intermediate step in tRNA ligation. Can also alter the NTP specificity of RtcB such that ATP, dGTP or ITP is used efficiently. Chaperone or modulator of proteins involved in DNA or RNA processing. Protects the tRNA (cytosine-5-)-methyltransferase PAB1947 against aggregation and increases its specificity. This chain is Protein archease, found in Pyrococcus abyssi (strain GE5 / Orsay).